The sequence spans 373 residues: 2-aminoethylphosphonate--pyruvate transaminase (373 aa).

Lysine 191 bears the N6-(pyridoxal phosphate)lysine mark.

This sequence belongs to the class-V pyridoxal-phosphate-dependent aminotransferase family. PhnW subfamily. Homodimer. Pyridoxal 5'-phosphate serves as cofactor.

The enzyme catalyses (2-aminoethyl)phosphonate + pyruvate = phosphonoacetaldehyde + L-alanine. In terms of biological role, involved in phosphonate degradation. This chain is 2-aminoethylphosphonate--pyruvate transaminase, found in Burkholderia ambifaria (strain MC40-6).